A 30-amino-acid chain; its full sequence is Cyclotide hyen-L (30 aa).

Positions 1–30 (GIPCAESCVYIPCTVTALLGCSCSDKVCYN) form a cross-link, cyclopeptide (Gly-Asn). 3 disulfide bridges follow: cysteine 4–cysteine 21, cysteine 8–cysteine 23, and cysteine 13–cysteine 28.

This is a cyclic peptide. As to expression, detected in stems (at protein level).

Functionally, probably participates in a plant defense mechanism. Has cytotoxic activity against HUVEC cells (LC(50)= 2.26 uM) and various cancer cells including HeLa (LC(50)= 3.48 uM), MCF-7 and K562. Displays very weak hemolytic activity. Binds to and induces leakage in phospholipd membranes, particularly ones containing 1-palmitoyl-2-oleophosphatidylethanolamine (POPE). This Pigea enneasperma (Spade flower) protein is Cyclotide hyen-L.